The chain runs to 342 residues: scyllo-inositol 2-dehydrogenase (NAD(+)) (342 aa).

This sequence belongs to the Gfo/Idh/MocA family.

The enzyme catalyses scyllo-inositol + NAD(+) = scyllo-inosose + NADH + H(+). Its pathway is polyol metabolism. Catalyzes the reversible NAD(+)-dependent oxidation of scyllo-inositol (SI) to 2,4,6/3,5-pentahydroxycyclohexanone (scyllo-inosose or SIS). Is required for SI catabolism that allows B.subtilis to utilize SI as the sole carbon source for growth. Cannot use NADP(+) instead of NAD(+). The sequence is that of scyllo-inositol 2-dehydrogenase (NAD(+)) from Bacillus subtilis (strain 168).